The sequence spans 161 residues: Phosphopantetheine adenylyltransferase (161 aa).

Substrate is bound at residue Thr-11. ATP is bound by residues Thr-11–Phe-12 and His-19. Residues Lys-43, Thr-75, and Arg-89 each contribute to the substrate site. Residues Gly-90–Arg-92, Glu-100, and Tyr-125–Ser-131 each bind ATP.

It belongs to the bacterial CoaD family. As to quaternary structure, homohexamer. Mg(2+) serves as cofactor.

The protein localises to the cytoplasm. It catalyses the reaction (R)-4'-phosphopantetheine + ATP + H(+) = 3'-dephospho-CoA + diphosphate. It functions in the pathway cofactor biosynthesis; coenzyme A biosynthesis; CoA from (R)-pantothenate: step 4/5. Its function is as follows. Reversibly transfers an adenylyl group from ATP to 4'-phosphopantetheine, yielding dephospho-CoA (dPCoA) and pyrophosphate. The polypeptide is Phosphopantetheine adenylyltransferase (Listeria welshimeri serovar 6b (strain ATCC 35897 / DSM 20650 / CCUG 15529 / CIP 8149 / NCTC 11857 / SLCC 5334 / V8)).